The sequence spans 90 residues: Small ribosomal subunit protein uS19 (90 aa).

The protein belongs to the universal ribosomal protein uS19 family.

Protein S19 forms a complex with S13 that binds strongly to the 16S ribosomal RNA. The sequence is that of Small ribosomal subunit protein uS19 from Nitrosococcus oceani (strain ATCC 19707 / BCRC 17464 / JCM 30415 / NCIMB 11848 / C-107).